The following is a 1019-amino-acid chain: Serine/threonine-protein kinase 31 (1019 aa).

Residues 78–137 enclose the Tudor domain; sequence NLDPNKIYGGLFSEDQCWYRCKVLKIISVEKCLVRYIDYGNTEILNRSDIVEIPLELQFS. A coiled-coil region spans residues 298–355; that stretch reads EKIKQDQKLIEENEKLKTEKDALLESYKALELKVEQIAQELQQEKAAAVDLTNHLEYT. The region spanning 710-1019 is the Protein kinase domain; it reads IGLLKYMNSG…TRNGEANFDC (310 aa). Residues 716-724 and Lys-737 contribute to the ATP site; that span reads MNSGGLLTM.

This sequence belongs to the protein kinase superfamily. Ser/Thr protein kinase family. In terms of tissue distribution, testis specific.

It carries out the reaction L-seryl-[protein] + ATP = O-phospho-L-seryl-[protein] + ADP + H(+). The enzyme catalyses L-threonyl-[protein] + ATP = O-phospho-L-threonyl-[protein] + ADP + H(+). This is Serine/threonine-protein kinase 31 (STK31) from Homo sapiens (Human).